The sequence spans 459 residues: Probable 1,4-beta-D-glucan cellobiohydrolase C (459 aa).

Residues 1 to 18 (MHYPLSLALAFLPFGIQA) form the signal peptide. The CBM1 domain occupies 19-54 (QQTLWGQCGGQGYSGATSCVAGATCATVNEYYAQCT). Disulfide bonds link cysteine 26–cysteine 43 and cysteine 37–cysteine 53. The tract at residues 54–94 (TPAAGTSSATTLKTTTSSTTAAVTTTTTTQSPTGSASPTTT) is thr-rich linker. Positions 76–97 (VTTTTTTQSPTGSASPTTTASA) are disordered. The catalytic stretch occupies residues 95 to 459 (ASASGNPFSG…QLLTNANPAF (365 aa)). The active site involves aspartate 189. Cysteine 190 and cysteine 249 are joined by a disulfide. Aspartate 235 serves as the catalytic Proton donor. N-linked (GlcNAc...) asparagine glycosylation occurs at asparagine 303. Cysteines 381 and 428 form a disulfide. Aspartate 414 (nucleophile) is an active-site residue.

Belongs to the glycosyl hydrolase 6 (cellulase B) family.

The protein resides in the secreted. It catalyses the reaction Hydrolysis of (1-&gt;4)-beta-D-glucosidic linkages in cellulose and cellotetraose, releasing cellobiose from the non-reducing ends of the chains.. Its function is as follows. The biological conversion of cellulose to glucose generally requires three types of hydrolytic enzymes: (1) Endoglucanases which cut internal beta-1,4-glucosidic bonds; (2) Exocellobiohydrolases that cut the disaccharide cellobiose from the non-reducing end of the cellulose polymer chain; (3) Beta-1,4-glucosidases which hydrolyze the cellobiose and other short cello-oligosaccharides to glucose. The chain is Probable 1,4-beta-D-glucan cellobiohydrolase C (cbhC) from Aspergillus niger (strain ATCC MYA-4892 / CBS 513.88 / FGSC A1513).